A 907-amino-acid polypeptide reads, in one-letter code: Valine--tRNA ligase (907 aa).

Positions 45 to 55 (PNVTGSLHMGH) match the 'HIGH' region motif. A 'KMSKS' region motif is present at residues 554-558 (KMSKS). Lys557 contacts ATP. Residues 838 to 870 (GQLIDLEAERARLMKDVSKIEQDIEKLSAKLSN) are a coiled coil.

The protein belongs to the class-I aminoacyl-tRNA synthetase family. ValS type 1 subfamily. As to quaternary structure, monomer.

The protein localises to the cytoplasm. The catalysed reaction is tRNA(Val) + L-valine + ATP = L-valyl-tRNA(Val) + AMP + diphosphate. In terms of biological role, catalyzes the attachment of valine to tRNA(Val). As ValRS can inadvertently accommodate and process structurally similar amino acids such as threonine, to avoid such errors, it has a 'posttransfer' editing activity that hydrolyzes mischarged Thr-tRNA(Val) in a tRNA-dependent manner. The protein is Valine--tRNA ligase of Bartonella henselae (strain ATCC 49882 / DSM 28221 / CCUG 30454 / Houston 1) (Rochalimaea henselae).